The following is a 166-amino-acid chain: Ribosome maturation factor RimP (166 aa).

It belongs to the RimP family.

It localises to the cytoplasm. Its function is as follows. Required for maturation of 30S ribosomal subunits. In Psychrobacter arcticus (strain DSM 17307 / VKM B-2377 / 273-4), this protein is Ribosome maturation factor RimP.